A 469-amino-acid chain; its full sequence is Protein translocase subunit SecY (469 aa).

At 1-20 (MSFIDSLATLGQYLPAVTKP) the chain is on the cytoplasmic side. A helical membrane pass occupies residues 21–47 (KEKPSLGQKLVWSLVAVIIYLIMASTP). Topologically, residues 48–59 (LYGITSASFFKN) are extracellular. The helical intramembrane region spans 60–67 (LILEQIIF). Residues 60 to 88 (LILEQIIFASTTGTLAQLGIGPIITAGLI) traverse the membrane as a discontinuously helical segment. The stretch at 68-79 (ASTTGTLAQLGI) is an intramembrane region. Residues 80 to 88 (GPIITAGLI) constitute an intramembrane region (helical). At 89 to 109 (MQILAGSKLISIDLNDPDDRV) the chain is on the cytoplasmic side. A helical transmembrane segment spans residues 110-131 (KFTEAQKGLAFIFILVESALFG). The Extracellular portion of the chain corresponds to 132 to 146 (YVLARTSTTINASIL). The chain crosses the membrane as a helical span at residues 147 to 171 (FIAGIVIAQLIVATYLILLLDELIQ). Topologically, residues 172–178 (KGWGLGS) are cytoplasmic. Residues 179–197 (GVSLFILAGVMKIMFWDMF) traverse the membrane as a helical segment. Residues 198 to 240 (GIASVSSQNLPIGFFPALFTALASHSDVLNLIVNTSTKNLFQP) lie on the Extracellular side of the membrane. A helical transmembrane segment spans residues 241–262 (DLVGLVTTIALIIITIYLTTMT). Residues 263 to 287 (IEIPVTSQKLRGIRRTIPLNFLYVS) are Cytoplasmic-facing. Residues 288 to 309 (SIPVIFVAVLGSDIQLFASLAS) form a helical membrane-spanning segment. The Extracellular segment spans residues 310-347 (YVSPSASNILNTVSGVFFFPPPNSAIPHSIYAVVLDPL). A helical membrane pass occupies residues 348–367 (GALEYAVVFIVLSILFGILW). The Cytoplasmic portion of the chain corresponds to 368 to 410 (VDVAGLDPATQAQQLVEAGIEIPGVRNNPKIIEGILARYIYPL). A helical membrane pass occupies residues 411 to 429 (AFFSSIIVGLIAVFATLLG). Residues 430 to 432 (AYG) lie on the Extracellular side of the membrane. A helical membrane pass occupies residues 433-447 (TGIGILLAVTIAIQY). The Cytoplasmic segment spans residues 448 to 469 (YSLLAYERSLEMYPLLKRLIGE).

This sequence belongs to the SecY/SEC61-alpha family. In terms of assembly, component of the Sec protein translocase complex. Heterotrimer consisting of alpha (SecY), beta (SecG) and gamma (SecE) subunits. The heterotrimers can form oligomers, although 1 heterotrimer is thought to be able to translocate proteins. Interacts with the ribosome. May interact with SecDF, and other proteins may be involved.

It localises to the cell membrane. Its function is as follows. The central subunit of the protein translocation channel SecYEG. Consists of two halves formed by TMs 1-5 and 6-10. These two domains form a lateral gate at the front which open onto the bilayer between TMs 2 and 7, and are clamped together by SecE at the back. The channel is closed by both a pore ring composed of hydrophobic SecY resides and a short helix (helix 2A) on the extracellular side of the membrane which forms a plug. The plug probably moves laterally to allow the channel to open. The ring and the pore may move independently. The sequence is that of Protein translocase subunit SecY from Saccharolobus solfataricus (strain ATCC 35092 / DSM 1617 / JCM 11322 / P2) (Sulfolobus solfataricus).